The primary structure comprises 270 residues: Putative phosphoenolpyruvate synthase regulatory protein (270 aa).

150 to 157 (GVSRCGKT) serves as a coordination point for ADP.

The protein belongs to the pyruvate, phosphate/water dikinase regulatory protein family. PSRP subfamily.

The catalysed reaction is [pyruvate, water dikinase] + ADP = [pyruvate, water dikinase]-phosphate + AMP + H(+). It catalyses the reaction [pyruvate, water dikinase]-phosphate + phosphate + H(+) = [pyruvate, water dikinase] + diphosphate. Functionally, bifunctional serine/threonine kinase and phosphorylase involved in the regulation of the phosphoenolpyruvate synthase (PEPS) by catalyzing its phosphorylation/dephosphorylation. This Shewanella woodyi (strain ATCC 51908 / MS32) protein is Putative phosphoenolpyruvate synthase regulatory protein.